Reading from the N-terminus, the 250-residue chain is HTH-type transcriptional regulator SarS (250 aa).

DNA-binding regions (H-T-H motif) lie at residues 53-76 (FKKI…VLVK) and 177-200 (LKDL…NLKK).

Belongs to the SarA family.

The protein localises to the cytoplasm. Functionally, transcriptional regulator that controls expression of some virulence factors in a cell density-dependent manner. The sequence is that of HTH-type transcriptional regulator SarS (sarS) from Staphylococcus aureus (strain Mu3 / ATCC 700698).